Here is a 65-residue protein sequence, read N- to C-terminus: UPF0434 protein BRADO0313 (65 aa).

The protein belongs to the UPF0434 family.

The protein is UPF0434 protein BRADO0313 of Bradyrhizobium sp. (strain ORS 278).